The following is a 640-amino-acid chain: F-box protein MET30 (640 aa).

Residues 1-19 (MRRERQRMMSFEDKDKDDL) are compositionally biased toward basic and acidic residues. The disordered stretch occupies residues 1 to 84 (MRRERQRMMS…ATNDSGTRVQ (84 aa)). The segment at 1–299 (MRRERQRMMS…KGHCRIQEFK (299 aa)) is necessary to mediate nuclear localization. 2 stretches are compositionally biased toward polar residues: residues 45 to 56 (TGSSDDLAQGSS) and 64 to 82 (ATRS…SGTR). Residue Ser-67 is modified to Phosphoserine. The interaction with SKP1/CBF3D stretch occupies residues 180-225 (KIDFISILPQELSLKILSYLDCQSLCNATRVCRKWQKLADDDRVWY). The important for mediating homomultimerization stretch occupies residues 180 to 277 (KIDFISILPQ…TQTTRPWKVI (98 aa)). One can recognise an F-box domain in the interval 181 to 227 (IDFISILPQELSLKILSYLDCQSLCNATRVCRKWQKLADDDRVWYHM). The tract at residues 277 to 640 (IYRERFKVES…VKMYKFDLND (364 aa)) is interaction with MET4. 8 WD repeats span residues 300-328 (GHMD…GIWD), 340-368 (GHSD…RVWN), 380-408 (GHSD…KVWH), 419-449 (GHTE…RMWD), 461-499 (GHVG…TMTD), 509-538 (NEQE…KLWD), 550-578 (GHVE…KVWD), and 607-635 (DKVA…KMYK). Residues 481 to 495 (ATDNTSDGSSPQDDP) are compositionally biased toward polar residues. A disordered region spans residues 481–516 (ATDNTSDGSSPQDDPTMTDGADESDTPSNEQETVLD).

This sequence belongs to the WD repeat MET30/SCONB/SCON-2 family. Homomultimer. Interacts with CDC53 and SKP1/CBF3D to form the E3 ubiquitin ligase complex SCF(Met30). Interacts with MET4.

Its subcellular location is the cytoplasm. The protein localises to the nucleus. Its pathway is protein modification; protein ubiquitination. In terms of biological role, substrate-recognition component of the SCF(Met30) complex, an E3 ubiquitin ligase complex that mediates the ubiquitination and subsequent proteasomal degradation of target proteins. Negatively regulates sulfur amino acids biosynthesis genes expression. Controls cell cycle function (being required for the G1/S transition and M-phase but not the S-phase), sulfur metabolism, and methionine biosynthesis as part of the SCF(Met30) complex. Required for the efficient binding of CDC45 and MCM proteins to origins of replication. Required for efficient expression of G1 cyclins. The SCF(Met30) complex catalyzes ubiquitination and degradation of the Cdk-inhibitory kinase SWE1. Involved in the S-adenosylmethionine (AdoMet)-mediated inhibition of the transcription function of MET4. The SCF(Met30) complex mediates ubiquitination and subsequent degradation of MET4 and the cellular response to cadmium. The SCF(Met30) complex acts as an inhibitor of autophagy by promoting ubiquitination and degradation of ATG9 in normal conditions. The chain is F-box protein MET30 from Saccharomyces cerevisiae (strain ATCC 204508 / S288c) (Baker's yeast).